The following is a 453-amino-acid chain: UDP-N-acetylmuramate--L-alanyl-gamma-D-glutamyl-meso-2,6-diaminoheptandioate ligase (453 aa).

ATP is bound at residue 111-117; that stretch reads GTHGKTT.

Belongs to the MurCDEF family. Mpl subfamily. Mg(2+) serves as cofactor.

It carries out the reaction UDP-N-acetyl-alpha-D-muramate + L-alanyl-gamma-D-glutamyl-meso-2,6-diaminopimelate + ATP = UDP-N-acetyl-alpha-D-muramoyl-L-alanyl-gamma-D-glutamyl-meso-2,6-diaminopimelate + ADP + phosphate + H(+). The protein operates within cell wall biogenesis; peptidoglycan recycling. Reutilizes the intact tripeptide L-alanyl-gamma-D-glutamyl-meso-diaminopimelate by linking it to UDP-N-acetylmuramate. The protein is UDP-N-acetylmuramate--L-alanyl-gamma-D-glutamyl-meso-2,6-diaminoheptandioate ligase of Haemophilus influenzae (strain ATCC 51907 / DSM 11121 / KW20 / Rd).